The chain runs to 168 residues: Crossover junction endodeoxyribonuclease RuvC (168 aa).

Catalysis depends on residues aspartate 9, glutamate 70, and aspartate 145. Residues aspartate 9, glutamate 70, and aspartate 145 each coordinate Mg(2+).

Belongs to the RuvC family. In terms of assembly, homodimer which binds Holliday junction (HJ) DNA. The HJ becomes 2-fold symmetrical on binding to RuvC with unstacked arms; it has a different conformation from HJ DNA in complex with RuvA. In the full resolvosome a probable DNA-RuvA(4)-RuvB(12)-RuvC(2) complex forms which resolves the HJ. Requires Mg(2+) as cofactor.

The protein localises to the cytoplasm. It carries out the reaction Endonucleolytic cleavage at a junction such as a reciprocal single-stranded crossover between two homologous DNA duplexes (Holliday junction).. Its function is as follows. The RuvA-RuvB-RuvC complex processes Holliday junction (HJ) DNA during genetic recombination and DNA repair. Endonuclease that resolves HJ intermediates. Cleaves cruciform DNA by making single-stranded nicks across the HJ at symmetrical positions within the homologous arms, yielding a 5'-phosphate and a 3'-hydroxyl group; requires a central core of homology in the junction. The consensus cleavage sequence is 5'-(A/T)TT(C/G)-3'. Cleavage occurs on the 3'-side of the TT dinucleotide at the point of strand exchange. HJ branch migration catalyzed by RuvA-RuvB allows RuvC to scan DNA until it finds its consensus sequence, where it cleaves and resolves the cruciform DNA. The sequence is that of Crossover junction endodeoxyribonuclease RuvC from Chlamydia felis (strain Fe/C-56) (Chlamydophila felis).